Reading from the N-terminus, the 348-residue chain is MSRFWSPFVKDLVPYVPGEQPKLARLVKLNTNENPYGPSPKALEAMRGELNDNLRLYPDPNGDRLKQAVAEYYGVTTGQVFVGNGSDEVLAHIFHGLFQHGGPLLFPDISYSFYPVYCGLYGIPFEPVALDEQFQIRVEDYQKPNAGIIFPNPNAPTGCLLPLQAIEQLLQANRDSVVVVDEAYIDFGGQTAISLVDRYDNLLVTQTLSKSRSLAGLRVGLAVGHPDLIEALERIKNSFNSYPLDRMAIVGAAAAFEDQAYFEATCRKVIDSREALVEQLTAKGFEVLPSAANFIFARHPQEDAAQLAARLREQGVIVRHFKQQRIAQFLRITIGTPEMNQALIDALS.

Residue Lys210 is modified to N6-(pyridoxal phosphate)lysine.

It belongs to the class-II pyridoxal-phosphate-dependent aminotransferase family. Histidinol-phosphate aminotransferase subfamily. As to quaternary structure, homodimer. It depends on pyridoxal 5'-phosphate as a cofactor.

It carries out the reaction L-histidinol phosphate + 2-oxoglutarate = 3-(imidazol-4-yl)-2-oxopropyl phosphate + L-glutamate. It participates in amino-acid biosynthesis; L-histidine biosynthesis; L-histidine from 5-phospho-alpha-D-ribose 1-diphosphate: step 7/9. The protein is Histidinol-phosphate aminotransferase of Pseudomonas putida (strain W619).